We begin with the raw amino-acid sequence, 42 residues long: Purine nucleoside phosphorylase DeoD-type (42 aa).

A purine D-ribonucleoside is bound at residue 8–9; that stretch reads SD. D9 functions as the Proton donor in the catalytic mechanism.

The protein belongs to the PNP/UDP phosphorylase family. Homohexamer; trimer of homodimers.

The catalysed reaction is a purine D-ribonucleoside + phosphate = a purine nucleobase + alpha-D-ribose 1-phosphate. It carries out the reaction a purine 2'-deoxy-D-ribonucleoside + phosphate = a purine nucleobase + 2-deoxy-alpha-D-ribose 1-phosphate. In terms of biological role, catalyzes the reversible phosphorolytic breakdown of the N-glycosidic bond in the beta-(deoxy)ribonucleoside molecules, with the formation of the corresponding free purine bases and pentose-1-phosphate. This chain is Purine nucleoside phosphorylase DeoD-type, found in Mycoplasmoides pirum (Mycoplasma pirum).